We begin with the raw amino-acid sequence, 170 residues long: MAFVMIREAKEGDCGNILRLIRELAEYEKLSDQVKISEEALRADGFGETPFYHCLVAEILSAPGEPQGPCVVGYGLYYFSYSTWKGRNIYLEDIYVKPEYRGQGIGSKIIKKVAEVALDKGCSQLRLAVLDWNKRAMDLYKALGAQDLTEAEGWHCFRFEGEAMRELAGK.

One can recognise an N-acetyltransferase domain in the interval 4-166 (VMIREAKEGD…FRFEGEAMRE (163 aa)). 27 to 28 (YE) is a substrate binding site. Lys-29 bears the N6-acetyllysine mark. Glu-92 is a binding site for substrate. Residues 94–96 (IYV), 102–107 (GQGIGS), 133–135 (NKR), and Tyr-140 each bind acetyl-CoA. Tyr-140 serves as the catalytic Proton donor. Glu-152 contacts substrate.

The protein belongs to the acetyltransferase family. Homodimer.

Its subcellular location is the cytoplasm. It catalyses the reaction S-(2-aminoethyl)-L-cysteine + acetyl-CoA = S-(2-acetamidoethyl)-L-cysteine + CoA + H(+). It carries out the reaction an alkane-alpha,omega-diamine + acetyl-CoA = an N-acetylalkane-alpha,omega-diamine + CoA + H(+). Catalyzes the N-acetylation of the amino acid thialysine (S-(2-aminoethyl)-L-cysteine), a L-lysine analog with the 4-methylene group substituted with a sulfur. May also catalyze acetylation of polyamines, such as norspermidine, spermidine or spermine. However, ability to acetylate polyamines is weak, suggesting that it does not act as a diamine acetyltransferase in vivo. The sequence is that of Thialysine N-epsilon-acetyltransferase from Bos taurus (Bovine).